We begin with the raw amino-acid sequence, 281 residues long: Release factor glutamine methyltransferase (281 aa).

S-adenosyl-L-methionine contacts are provided by Glu-141 and Asn-185. Position 185-188 (185-188) interacts with substrate; it reads NPPY.

Belongs to the protein N5-glutamine methyltransferase family. PrmC subfamily.

The catalysed reaction is L-glutaminyl-[peptide chain release factor] + S-adenosyl-L-methionine = N(5)-methyl-L-glutaminyl-[peptide chain release factor] + S-adenosyl-L-homocysteine + H(+). Methylates the class 1 translation termination release factors RF1/PrfA and RF2/PrfB on the glutamine residue of the universally conserved GGQ motif. The chain is Release factor glutamine methyltransferase from Mycolicibacterium smegmatis (strain ATCC 700084 / mc(2)155) (Mycobacterium smegmatis).